The following is an 85-amino-acid chain: Large ribosomal subunit protein bL31B (85 aa).

The protein belongs to the bacterial ribosomal protein bL31 family. Type B subfamily. As to quaternary structure, part of the 50S ribosomal subunit.

The protein is Large ribosomal subunit protein bL31B of Staphylococcus haemolyticus (strain JCSC1435).